The primary structure comprises 66 residues: Cold shock protein CspB (66 aa).

In terms of domain architecture, CSD spans 4–63 (GKVKWFNNEKGYGFIEVEGGSDVFVHFTAIQGEGFKTLEEGQEVSFEIVQGNRGPQAANV).

Homodimer.

The protein resides in the cytoplasm. In terms of biological role, affects cell viability at low temperatures. This chain is Cold shock protein CspB (cspB), found in Bacillus caldolyticus.